Reading from the N-terminus, the 119-residue chain is Fluoride-specific ion channel FluC (119 aa).

The next 4 membrane-spanning stretches (helical) occupy residues 5–25 (IIPLSIGAALGATARWLLNLA), 34–54 (TGNLFANWTGALLIGIFAETI), 59–79 (WKLLLITGFLGSLTTLSGFSL), and 97–117 (IFLHTAGSLLLTWLGLKIGAA). Positions 69 and 72 each coordinate Na(+).

Belongs to the fluoride channel Fluc/FEX (TC 1.A.43) family.

It localises to the cell inner membrane. The enzyme catalyses fluoride(in) = fluoride(out). With respect to regulation, na(+) is not transported, but it plays an essential structural role and its presence is essential for fluoride channel function. In terms of biological role, fluoride-specific ion channel. Important for reducing fluoride concentration in the cell, thus reducing its toxicity. The protein is Fluoride-specific ion channel FluC of Neisseria meningitidis serogroup C / serotype 2a (strain ATCC 700532 / DSM 15464 / FAM18).